The primary structure comprises 134 residues: Large ribosomal subunit protein bL12 (134 aa).

It belongs to the bacterial ribosomal protein bL12 family. Homodimer. Part of the ribosomal stalk of the 50S ribosomal subunit. Forms a multimeric L10(L12)X complex, where L10 forms an elongated spine to which 2 to 4 L12 dimers bind in a sequential fashion. Binds GTP-bound translation factors.

Its function is as follows. Forms part of the ribosomal stalk which helps the ribosome interact with GTP-bound translation factors. Is thus essential for accurate translation. The protein is Large ribosomal subunit protein bL12 of Chlamydia abortus (strain DSM 27085 / S26/3) (Chlamydophila abortus).